We begin with the raw amino-acid sequence, 531 residues long: Zinc finger C2HC domain-containing protein 1C (531 aa).

The segment at 16 to 45 (MLPHNTTEAPGPHSAKQDSYEQSDSSQQSL) is disordered. Positions 35–44 (YEQSDSSQQS) are enriched in low complexity. Residues 209–264 (VQIRRLEAAGESLEEEIRRKQILLRGKLKKTEEELRRIQTQKEQAKENENRELQKI) adopt a coiled-coil conformation. 2 disordered regions span residues 290-318 (FEEE…QLSD) and 334-387 (NKIR…PQLG). A compositionally biased stretch (basic and acidic residues) spans 293–305 (EFSRDKREDETWE). A compositionally biased stretch (polar residues) spans 306 to 315 (RSQQNSSPFQ). The segment covering 335–345 (KIRDRVSEPSM) has biased composition (basic and acidic residues). Low complexity predominate over residues 366-380 (SSLSMAPDSSGSSGS). C2HC/C3H-type zinc fingers lie at residues 385–414 (QLGE…MQGS) and 493–522 (DYIQ…IKNR). 8 residues coordinate Zn(2+): cysteine 389, cysteine 392, histidine 404, cysteine 408, cysteine 497, cysteine 500, histidine 512, and cysteine 516.

The protein belongs to the ZC2HC1 family. Zn(2+) is required as a cofactor.

The protein is Zinc finger C2HC domain-containing protein 1C (ZC2HC1C) of Macaca fascicularis (Crab-eating macaque).